Here is a 200-residue protein sequence, read N- to C-terminus: Probable molybdenum cofactor guanylyltransferase (200 aa).

GTP-binding positions include 9-11 (LAG), K21, D69, and D100. D100 lines the Mg(2+) pocket.

This sequence belongs to the MobA family. Mg(2+) is required as a cofactor.

The protein resides in the cytoplasm. The enzyme catalyses Mo-molybdopterin + GTP + H(+) = Mo-molybdopterin guanine dinucleotide + diphosphate. Transfers a GMP moiety from GTP to Mo-molybdopterin (Mo-MPT) cofactor (Moco or molybdenum cofactor) to form Mo-molybdopterin guanine dinucleotide (Mo-MGD) cofactor. This chain is Probable molybdenum cofactor guanylyltransferase, found in Bacillus cereus (strain G9842).